Consider the following 334-residue polypeptide: Cytochrome c551 peroxidase (334 aa).

An N-terminal signal peptide occupies residues 1 to 26 (MIKRTLTVSLLSLSLGAMFASAGVMA). Residues Cys65, Cys68, His69, Cys209, Cys212, His213, His270, and Met284 each contribute to the heme c site. The segment at 315–334 (FKLPILPPSNNDTPRSQPYE) is disordered. The segment covering 322 to 334 (PSNNDTPRSQPYE) has biased composition (polar residues).

Binds 2 heme c groups covalently per subunit.

Its subcellular location is the periplasm. It catalyses the reaction 2 Fe(II)-[cytochrome c] + H2O2 + 2 H(+) = 2 Fe(III)-[cytochrome c] + 2 H2O. This Nitrosomonas europaea (strain ATCC 19718 / CIP 103999 / KCTC 2705 / NBRC 14298) protein is Cytochrome c551 peroxidase (ccp).